A 180-amino-acid polypeptide reads, in one-letter code: Mitochondrial inner membrane protease subunit 2 (180 aa).

A helical membrane pass occupies residues 19 to 39 (LVGITLWVPVLMFVEQHVVSV). Active-site residues include Ser-46 and Lys-92.

It belongs to the peptidase S26 family. IMP2 subfamily. As to quaternary structure, heterodimer of 2 subunits, imp1 and imp2.

It localises to the mitochondrion inner membrane. In terms of biological role, catalyzes the removal of transit peptides required for the targeting of proteins from the mitochondrial matrix, across the inner membrane, into the inter-membrane space. The polypeptide is Mitochondrial inner membrane protease subunit 2 (Schizosaccharomyces pombe (strain 972 / ATCC 24843) (Fission yeast)).